We begin with the raw amino-acid sequence, 637 residues long: Anthranilate synthase, phenazine specific (637 aa).

Residues 1–434 are anthranilate synthase component I; the sequence is MSQTAAHLME…QREQIQADFS (434 aa). The Glutamine amidotransferase type-1 domain occupies 437–628; the sequence is QVLIVDAEDT…LRHALIHTPV (192 aa). Active-site for GATase activity residues include C517, H602, and E604.

The catalysed reaction is chorismate + L-glutamine = anthranilate + pyruvate + L-glutamate + H(+). The protein operates within antibiotic biosynthesis; phenazine biosynthesis. Its function is as follows. Involved in the biosynthesis of the antibiotic, phenazine, a nitrogen-containing heterocyclic molecule having important roles in virulence, competition and biological control. The protein is Anthranilate synthase, phenazine specific (phzB) of Pseudomonas chlororaphis (Pseudomonas aureofaciens).